An 898-amino-acid chain; its full sequence is Vacuolar membrane protease (898 aa).

Residues M1–R14 lie on the Cytoplasmic side of the membrane. The chain crosses the membrane as a helical span at residues T15 to I35. The Vacuolar segment spans residues T36–P342. N-linked (GlcNAc...) asparagine glycans are attached at residues N50, N103, and N110. 2 residues coordinate Zn(2+): H139 and D151. E183 acts as the Proton acceptor in catalysis. E184 serves as a coordination point for Zn(2+). Residue N200 is glycosylated (N-linked (GlcNAc...) asparagine). E209 and H284 together coordinate Zn(2+). Residues L343–V365 traverse the membrane as a helical segment. Residues T366–F411 are Cytoplasmic-facing. The chain crosses the membrane as a helical span at residues W412–I432. N433 is a topological domain (vacuolar). Residues P434–L454 form a helical membrane-spanning segment. Residues S455–Q479 are Cytoplasmic-facing. The chain crosses the membrane as a helical span at residues A480–G500. Residues A501–Y509 are Vacuolar-facing. A helical membrane pass occupies residues I510–L530. The Cytoplasmic portion of the chain corresponds to L531–S593. Residues G594–V614 form a helical membrane-spanning segment. The Vacuolar portion of the chain corresponds to S615–A635. Residues V636 to F656 traverse the membrane as a helical segment. At A657–V664 the chain is on the cytoplasmic side. A helical transmembrane segment spans residues A665–F685. Residues S686 to V898 are Vacuolar-facing. N-linked (GlcNAc...) asparagine glycosylation is found at N704, N733, and N764.

Belongs to the peptidase M28 family. Zn(2+) serves as cofactor.

The protein resides in the vacuole membrane. Functionally, may be involved in vacuolar sorting and osmoregulation. This Schizophyllum commune (strain H4-8 / FGSC 9210) (Split gill fungus) protein is Vacuolar membrane protease.